A 112-amino-acid chain; its full sequence is Pediocin PA-1 immunity protein (112 aa).

In terms of biological role, imparts immunity to pediocin PA-1/ACH to naturally sensitive host strains. The chain is Pediocin PA-1 immunity protein (pedB) from Pediococcus acidilactici.